Reading from the N-terminus, the 814-residue chain is Kinesin-like protein KIF6 (814 aa).

The Kinesin motor domain occupies 5–345; sequence TIQIFARVKP…CRFAQRVALI (341 aa). 97–104 lines the ATP pocket; that stretch reads GQTGSGKT. Coiled-coil stretches lie at residues 356–385, 456–494, and 588–683; these read NPRLVIKRLQKEIQELKDELAMVTGEQRTE, LKEEEYRKLRDILKQRDNEINILVNMLKKEKKKAQEALH, and EAKA…KEFE. Residues 752–788 are disordered; the sequence is LPSPCPSPHSQKQSSTSTPLEDSIPKRPVSSIPLTGD. Over residues 759-771 the composition is skewed to polar residues; the sequence is PHSQKQSSTSTPL.

The protein belongs to the TRAFAC class myosin-kinesin ATPase superfamily. Kinesin family.

It localises to the cytoplasm. The protein localises to the cytoskeleton. The chain is Kinesin-like protein KIF6 (KIF6) from Homo sapiens (Human).